A 286-amino-acid chain; its full sequence is Acetylglutamate kinase (286 aa).

Residues 69–70, arginine 91, and asparagine 185 contribute to the substrate site; that span reads GG.

Belongs to the acetylglutamate kinase family. ArgB subfamily.

It localises to the cytoplasm. It catalyses the reaction N-acetyl-L-glutamate + ATP = N-acetyl-L-glutamyl 5-phosphate + ADP. The protein operates within amino-acid biosynthesis; L-arginine biosynthesis; N(2)-acetyl-L-ornithine from L-glutamate: step 2/4. Its function is as follows. Catalyzes the ATP-dependent phosphorylation of N-acetyl-L-glutamate. The sequence is that of Acetylglutamate kinase from Chlorobium chlorochromatii (strain CaD3).